The following is a 355-amino-acid chain: Protein RecA (355 aa).

72–79 (GPESSGKT) contacts ATP.

This sequence belongs to the RecA family.

The protein localises to the cytoplasm. Its function is as follows. Can catalyze the hydrolysis of ATP in the presence of single-stranded DNA, the ATP-dependent uptake of single-stranded DNA by duplex DNA, and the ATP-dependent hybridization of homologous single-stranded DNAs. It interacts with LexA causing its activation and leading to its autocatalytic cleavage. The polypeptide is Protein RecA (Wolbachia sp. subsp. Brugia malayi (strain TRS)).